The chain runs to 214 residues: UPF0502 protein Spro_2794 (214 aa).

This sequence belongs to the UPF0502 family.

This chain is UPF0502 protein Spro_2794, found in Serratia proteamaculans (strain 568).